The primary structure comprises 417 residues: MTGTLPTQFKDSDLSPLTRPNALGRFGKYGGQYVPETLIPALIELEQAAKEAWKDSSFNSELNHLLKTYVGRSTPLYEATRLTEHYRKNTLKGPRIWLKREDLNHTGAHKINNALGQALLAIRMGKKRIIAETGAGQHGVATATVCARFGLECIIYMGKEDMRRQALNVFRMQLLGASVRPVTSGTATLKDATSEAIRDWVTNVETTHYILGSVAGPHPYPMLVRDFHAVIGEETKQQCKQAFGRSPDVLLACVGGGSNAMGLFHSFVEDKSVRMIGVEAAGDGVETGRHAATITEGRVGVLHGAMSLLLQDKDGQVEEAHSISAGLDYPGVGPEHSYLKEIGRAEYAAVTDTEAIEALQLVSKLEGIIPALETAHAFAYLEKLCPTLNHNSEIVINCSGRGDKDVNTVAEKLGSEI.

The residue at position 110 (Lys-110) is an N6-(pyridoxal phosphate)lysine.

It belongs to the TrpB family. In terms of assembly, tetramer of two alpha and two beta chains. Requires pyridoxal 5'-phosphate as cofactor.

The catalysed reaction is (1S,2R)-1-C-(indol-3-yl)glycerol 3-phosphate + L-serine = D-glyceraldehyde 3-phosphate + L-tryptophan + H2O. It participates in amino-acid biosynthesis; L-tryptophan biosynthesis; L-tryptophan from chorismate: step 5/5. The beta subunit is responsible for the synthesis of L-tryptophan from indole and L-serine. This chain is Tryptophan synthase beta chain, found in Prochlorococcus marinus (strain NATL1A).